A 322-amino-acid chain; its full sequence is Protein-L-isoaspartate O-methyltransferase (322 aa).

The interval methionine 1–proline 101 is disordered. A compositionally biased stretch (basic and acidic residues) spans glutamate 14–glutamate 29. Low complexity-rich tracts occupy residues alanine 33–alanine 51 and histidine 76–glycine 91. Residue serine 170 is part of the active site.

It belongs to the methyltransferase superfamily. L-isoaspartyl/D-aspartyl protein methyltransferase family.

Its subcellular location is the cytoplasm. It carries out the reaction [protein]-L-isoaspartate + S-adenosyl-L-methionine = [protein]-L-isoaspartate alpha-methyl ester + S-adenosyl-L-homocysteine. In terms of biological role, catalyzes the methyl esterification of L-isoaspartyl residues in peptides and proteins that result from spontaneous decomposition of normal L-aspartyl and L-asparaginyl residues. It plays a role in the repair and/or degradation of damaged proteins. This is Protein-L-isoaspartate O-methyltransferase from Burkholderia pseudomallei (strain 1710b).